Here is a 99-residue protein sequence, read N- to C-terminus: UPF0235 protein AHA_3661 (99 aa).

This sequence belongs to the UPF0235 family.

The sequence is that of UPF0235 protein AHA_3661 from Aeromonas hydrophila subsp. hydrophila (strain ATCC 7966 / DSM 30187 / BCRC 13018 / CCUG 14551 / JCM 1027 / KCTC 2358 / NCIMB 9240 / NCTC 8049).